Reading from the N-terminus, the 208-residue chain is Interleukin-6 (208 aa).

The first 29 residues, 1–29 (MNSRFTSAFTPFAVSLGLLLVMTSAFPTP), serve as a signal peptide directing secretion. N38 is a glycosylation site (N-linked (GlcNAc...) asparagine). A disulfide bridge connects residues C72 and C78. S81 is modified (phosphoserine). A disulfide bond links C101 and C111.

This sequence belongs to the IL-6 superfamily. As to quaternary structure, component of a hexamer of two molecules each of IL6, IL6R and IL6ST; first binds to IL6R to associate with the signaling subunit IL6ST. Interacts with IL6R (via the N-terminal ectodomain); this interaction may be affected by IL6R-binding with SORL1, hence decreasing IL6 cis signaling. Interacts with SORL1 (via the N-terminal ectodomain); this interaction leads to IL6 internalization and lysosomal degradation. May form a trimeric complex with the soluble SORL1 ectodomain and soluble IL6R receptor; this interaction might stabilize circulating IL6, hence promoting IL6 trans signaling.

Its subcellular location is the secreted. Its function is as follows. Cytokine with a wide variety of biological functions in immunity, tissue regeneration, and metabolism. Binds to IL6R, then the complex associates to the signaling subunit IL6ST/gp130 to trigger the intracellular IL6-signaling pathway. The interaction with the membrane-bound IL6R and IL6ST stimulates 'classic signaling', whereas the binding of IL6 and soluble IL6R to IL6ST stimulates 'trans-signaling'. Alternatively, 'cluster signaling' occurs when membrane-bound IL6:IL6R complexes on transmitter cells activate IL6ST receptors on neighboring receiver cells. In terms of biological role, IL6 is a potent inducer of the acute phase response. Rapid production of IL6 contributes to host defense during infection and tissue injury, but excessive IL6 synthesis is involved in disease pathology. In the innate immune response, is synthesized by myeloid cells, such as macrophages and dendritic cells, upon recognition of pathogens through toll-like receptors (TLRs) at the site of infection or tissue injury. In the adaptive immune response, is required for the differentiation of B cells into immunoglobulin-secreting cells. Plays a major role in the differentiation of CD4(+) T cell subsets. Essential factor for the development of T follicular helper (Tfh) cells that are required for the induction of germinal-center formation. Required to drive naive CD4(+) T cells to the Th17 lineage. Also required for proliferation of myeloma cells and the survival of plasmablast cells. Functionally, acts as an essential factor in bone homeostasis and on vessels directly or indirectly by induction of VEGF, resulting in increased angiogenesis activity and vascular permeability. Induces, through 'trans-signaling' and synergistically with IL1B and TNF, the production of VEGF. Involved in metabolic controls, is discharged into the bloodstream after muscle contraction increasing lipolysis and improving insulin resistance. 'Trans-signaling' in central nervous system also regulates energy and glucose homeostasis. Mediates, through GLP-1, crosstalk between insulin-sensitive tissues, intestinal L cells and pancreatic islets to adapt to changes in insulin demand. Also acts as a myokine. Plays a protective role during liver injury, being required for maintenance of tissue regeneration. Also has a pivotal role in iron metabolism by regulating HAMP/hepcidin expression upon inflammation or bacterial infection. Through activation of IL6ST-YAP-NOTCH pathway, induces inflammation-induced epithelial regeneration. The sequence is that of Interleukin-6 (IL6) from Bubalus bubalis (Domestic water buffalo).